The chain runs to 439 residues: Rhodopsin (439 aa).

Asn1 carries N-linked (GlcNAc...) asparagine glycosylation. At 1 to 26 (NETWWYNPYMDIHSHWKQFDQVPAAV) the chain is on the extracellular side. The chain crosses the membrane as a helical span at residues 27–51 (YYSLGIFIAICGIIGCAGNGIVIYL). Residues 52–63 (FTKTKSLQTPAN) lie on the Cytoplasmic side of the membrane. Residues 64-90 (MFIINLAFSDFTFSLVNGFPMMTISCF) form a helical membrane-spanning segment. Over 91 to 102 (LKHWVFGQAACK) the chain is Extracellular. Residues Cys101 and Cys179 are joined by a disulfide bond. The helical transmembrane segment at 103–124 (VYGLIGGIFGLTSIMTMTMISI) threads the bilayer. The 'Ionic lock' involved in activated form stabilization signature appears at 125 to 127 (DRY). Topologically, residues 125–144 (DRYNVIRRPMSASKKMSHRK) are cytoplasmic. Residues 145-165 (AFIMIVFVWIWSTIWAIGPIF) form a helical membrane-spanning segment. The Extracellular portion of the chain corresponds to 166-192 (GWGAYQLEGVLCNCSFDYITRDASTRS). A helical transmembrane segment spans residues 193–217 (NIVCMYIFAFMFPIVVIFFCYFNIV). The Cytoplasmic segment spans residues 218-254 (MSVSNHEKEMAAMAKRLNAKELRKAQAGASAEMKLAK). The helical transmembrane segment at 255–276 (ISIVIVTQSLLSWSPYAIVALL) threads the bilayer. Residues 277–286 (AQFGPIEWVT) are Extracellular-facing. The chain crosses the membrane as a helical span at residues 287 to 308 (PYAAQLPVMFAKASAIHNPMIY). Lys298 carries the post-translational modification N6-(retinylidene)lysine. At 309-439 (SVSHPKFREA…PQAAPPQGVD (131 aa)) the chain is on the cytoplasmic side. S-palmitoyl cysteine attachment occurs at residues Cys329 and Cys330. Positions 369 to 381 (MMQKMQAQQQQQP) are enriched in low complexity. Residues 369–439 (MMQKMQAQQQ…PQAAPPQGVD (71 aa)) are disordered. A compositionally biased stretch (pro residues) spans 382-433 (AYPPQGYPPQGYPPPPPQGYPPQGYPPQGYPPQGYPPPPQGPPPQGPPPQAA).

The protein belongs to the G-protein coupled receptor 1 family. Opsin subfamily. Post-translationally, contains one covalently linked retinal chromophore. Upon light absorption, the covalently bound 11-cis-retinal is converted to all-trans-retinal. After hydrolysis of the Schiff base and release of the covalently bound all-trans-retinal, active rhodopsin is regenerated by binding of a fresh molecule of 11-cis-retinal.

The protein localises to the cell projection. The protein resides in the rhabdomere membrane. In terms of biological role, photoreceptor required for image-forming vision at low light intensity. Light-induced isomerization of 11-cis to all-trans retinal triggers a conformational change that activates signaling via G-proteins. Signaling mediates the activation of phospholipase C. Subsequent receptor phosphorylation mediates displacement of the bound G-protein alpha subunit by arrestin and terminates signaling. The sequence is that of Rhodopsin (RHO) from Alloteuthis subulata (Squid).